The sequence spans 253 residues: Major prion protein (253 aa).

Residues 1–22 (MANLGCWMLVLFVATWSDLGLC) form the signal peptide. The interval 23–38 (KKRPKPGGWNTGGSRY) is interaction with ADGRG6. The interaction with GRB2, ERI3 and SYN1 stretch occupies residues 23-230 (KKRPKPGGWN…ESQAYYQRGS (208 aa)). The disordered stretch occupies residues 26–108 (PKPGGWNTGG…WNKPSKPKTS (83 aa)). 5 consecutive repeat copies span residues 51 to 59 (PQGGGGWGQ), 60 to 67 (PHGGGWGQ), 68 to 75 (PHGGGWGQ), 76 to 83 (PHGGGWGQ), and 84 to 91 (PHGGGWGQ). Residues 51-91 (PQGGGGWGQPHGGGWGQPHGGGWGQPHGGGWGQPHGGGWGQ) form a 5 X 8 AA tandem repeats of P-H-G-G-G-W-G-Q region. Residues 52–95 (QGGGGWGQPHGGGWGQPHGGGWGQPHGGGWGQPHGGGWGQGGGT) show a composition bias toward gly residues. The Cu(2+) site is built by H61, G62, G63, H69, G70, G71, H77, G78, G79, H85, G86, and G87. A disulfide bridge connects residues C179 and C214. N-linked (GlcNAc...) asparagine glycosylation is found at N181 and N197. The GPI-anchor amidated serine moiety is linked to residue S230. Residues 231–253 (SMVLFSSPPVILLISFLIFLIVG) constitute a propeptide, removed in mature form.

This sequence belongs to the prion family. In terms of assembly, monomer and homodimer. Has a tendency to aggregate into amyloid fibrils containing a cross-beta spine, formed by a steric zipper of superposed beta-strands. Soluble oligomers may represent an intermediate stage on the path to fibril formation. Copper binding may promote oligomerization. Interacts with GRB2, APP, ERI3/PRNPIP and SYN1. Mislocalized cytosolically exposed PrP interacts with MGRN1; this interaction alters MGRN1 subcellular location and causes lysosomal enlargement. Interacts with APP. Interacts with KIAA1191. Interacts with ADGRG6.

Its subcellular location is the cell membrane. It localises to the golgi apparatus. Functionally, its primary physiological function is unclear. May play a role in neuronal development and synaptic plasticity. May be required for neuronal myelin sheath maintenance. May promote myelin homeostasis through acting as an agonist for ADGRG6 receptor. May play a role in iron uptake and iron homeostasis. Soluble oligomers are toxic to cultured neuroblastoma cells and induce apoptosis (in vitro). Association with GPC1 (via its heparan sulfate chains) targets PRNP to lipid rafts. Also provides Cu(2+) or Zn(2+) for the ascorbate-mediated GPC1 deaminase degradation of its heparan sulfate side chains. The chain is Major prion protein (PRNP) from Colobus guereza (Mantled guereza).